The chain runs to 332 residues: 4-hydroxy-3-methylbut-2-enyl diphosphate reductase (332 aa).

Residue cysteine 34 participates in [4Fe-4S] cluster binding. Histidine 63 and histidine 96 together coordinate (2E)-4-hydroxy-3-methylbut-2-enyl diphosphate. Residues histidine 63 and histidine 96 each coordinate dimethylallyl diphosphate. Residues histidine 63 and histidine 96 each coordinate isopentenyl diphosphate. Cysteine 118 provides a ligand contact to [4Fe-4S] cluster. Histidine 146 contacts (2E)-4-hydroxy-3-methylbut-2-enyl diphosphate. A dimethylallyl diphosphate-binding site is contributed by histidine 146. Histidine 146 provides a ligand contact to isopentenyl diphosphate. The Proton donor role is filled by glutamate 148. Threonine 186 serves as a coordination point for (2E)-4-hydroxy-3-methylbut-2-enyl diphosphate. [4Fe-4S] cluster is bound at residue cysteine 216. (2E)-4-hydroxy-3-methylbut-2-enyl diphosphate-binding residues include serine 244, serine 245, asparagine 246, and serine 289. 4 residues coordinate dimethylallyl diphosphate: serine 244, serine 245, asparagine 246, and serine 289. The isopentenyl diphosphate site is built by serine 244, serine 245, asparagine 246, and serine 289.

The protein belongs to the IspH family. [4Fe-4S] cluster serves as cofactor.

The catalysed reaction is isopentenyl diphosphate + 2 oxidized [2Fe-2S]-[ferredoxin] + H2O = (2E)-4-hydroxy-3-methylbut-2-enyl diphosphate + 2 reduced [2Fe-2S]-[ferredoxin] + 2 H(+). The enzyme catalyses dimethylallyl diphosphate + 2 oxidized [2Fe-2S]-[ferredoxin] + H2O = (2E)-4-hydroxy-3-methylbut-2-enyl diphosphate + 2 reduced [2Fe-2S]-[ferredoxin] + 2 H(+). It participates in isoprenoid biosynthesis; dimethylallyl diphosphate biosynthesis; dimethylallyl diphosphate from (2E)-4-hydroxy-3-methylbutenyl diphosphate: step 1/1. It functions in the pathway isoprenoid biosynthesis; isopentenyl diphosphate biosynthesis via DXP pathway; isopentenyl diphosphate from 1-deoxy-D-xylulose 5-phosphate: step 6/6. Functionally, catalyzes the conversion of 1-hydroxy-2-methyl-2-(E)-butenyl 4-diphosphate (HMBPP) into a mixture of isopentenyl diphosphate (IPP) and dimethylallyl diphosphate (DMAPP). Acts in the terminal step of the DOXP/MEP pathway for isoprenoid precursor biosynthesis. The protein is 4-hydroxy-3-methylbut-2-enyl diphosphate reductase of Mycolicibacterium paratuberculosis (strain ATCC BAA-968 / K-10) (Mycobacterium paratuberculosis).